The primary structure comprises 324 residues: CYFIP-related Rac1 interactor B (324 aa).

Residue G2 is the site of N-myristoyl glycine attachment. Residue K74 forms a Glycyl lysine isopeptide (Lys-Gly) (interchain with G-Cter in ubiquitin) linkage.

It belongs to the CYRI family. Interacts with RAC1 (GTP-bound form preferentially). Post-translationally, ubiquitinated at Lys-74 upon Salmonella bacterial infection.

Its subcellular location is the membrane. It localises to the mitochondrion. Functionally, negatively regulates RAC1 signaling and RAC1-driven cytoskeletal remodeling. Regulates chemotaxis, cell migration and epithelial polarization by controlling the polarity, plasticity, duration and extent of protrusions. Limits Rac1 mediated activation of the Scar/WAVE complex, focuses protrusion signals and regulates pseudopod complexity by inhibiting Scar/WAVE-induced actin polymerization. Protects against Salmonella bacterial infection. Attenuates processes such as macropinocytosis, phagocytosis and cell migration and restrict sopE-mediated bacterial entry. Also restricts infection mediated by Mycobacterium tuberculosis and Listeria monocytogenes. Involved in the regulation of mitochondrial dynamics and oxidative stress. This chain is CYFIP-related Rac1 interactor B, found in Homo sapiens (Human).